The chain runs to 138 residues: Small ribosomal subunit protein uS12 (138 aa).

At aspartate 89 the chain carries 3-methylthioaspartic acid. The segment at 107-138 is disordered; the sequence is VSGRMQRRSKYGAKFPKTGTGKTKAVPTKNKK.

This sequence belongs to the universal ribosomal protein uS12 family. Part of the 30S ribosomal subunit. Contacts proteins S8 and S17. May interact with IF1 in the 30S initiation complex.

In terms of biological role, with S4 and S5 plays an important role in translational accuracy. Functionally, interacts with and stabilizes bases of the 16S rRNA that are involved in tRNA selection in the A site and with the mRNA backbone. Located at the interface of the 30S and 50S subunits, it traverses the body of the 30S subunit contacting proteins on the other side and probably holding the rRNA structure together. The combined cluster of proteins S8, S12 and S17 appears to hold together the shoulder and platform of the 30S subunit. This Azobacteroides pseudotrichonymphae genomovar. CFP2 protein is Small ribosomal subunit protein uS12.